The sequence spans 469 residues: 3-isopropylmalate dehydratase large subunit (469 aa).

3 residues coordinate [4Fe-4S] cluster: Cys347, Cys410, and Cys413.

This sequence belongs to the aconitase/IPM isomerase family. LeuC type 1 subfamily. In terms of assembly, heterodimer of LeuC and LeuD. [4Fe-4S] cluster serves as cofactor.

The catalysed reaction is (2R,3S)-3-isopropylmalate = (2S)-2-isopropylmalate. Its pathway is amino-acid biosynthesis; L-leucine biosynthesis; L-leucine from 3-methyl-2-oxobutanoate: step 2/4. Functionally, catalyzes the isomerization between 2-isopropylmalate and 3-isopropylmalate, via the formation of 2-isopropylmaleate. The protein is 3-isopropylmalate dehydratase large subunit of Burkholderia lata (strain ATCC 17760 / DSM 23089 / LMG 22485 / NCIMB 9086 / R18194 / 383).